The following is a 357-amino-acid chain: DENN domain-containing protein 10 (357 aa).

Residues 1–136 (MAAVVAMDTQ…IAVLTKGICQ (136 aa)) form the uDENN domain. Residues 152 to 299 (KAYLAGSIKD…PEKSDSQVIQ (148 aa)) enclose the cDENN domain. In terms of domain architecture, dDENN spans 301–357 (IALKTKEIFTHLAPFSEVSDDGGKVILNVEALKQQRFPPATENFLYHLAAAEQMLKV).

The protein belongs to the DENND10 family. As to quaternary structure, interacts with the coiled-coil heterodimer of CCDC22 and CCDC93; the interaction is direct. Interacts with RAB27A and RAB27B (GDP-bound forms preferentially).

Its subcellular location is the late endosome. Guanine nucleotide exchange factor (GEF) regulating homeostasis of late endocytic pathway, including endosomal positioning, maturation and secretion, possibly through activating Rab proteins such as RAB27A and RAB27B. Promotes the exchange of GDP to GTP, converting inactive GDP-bound RAB27A and RAB27B into their active GTP-bound form. This Mus musculus (Mouse) protein is DENN domain-containing protein 10.